The sequence spans 182 residues: Ribosome maturation factor RimM (182 aa).

The PRC barrel domain occupies 103–182 (EDEFYWRELF…RIEVDWDPGF (80 aa)).

It belongs to the RimM family. Binds ribosomal protein uS19.

It is found in the cytoplasm. In terms of biological role, an accessory protein needed during the final step in the assembly of 30S ribosomal subunit, possibly for assembly of the head region. Essential for efficient processing of 16S rRNA. May be needed both before and after RbfA during the maturation of 16S rRNA. It has affinity for free ribosomal 30S subunits but not for 70S ribosomes. The sequence is that of Ribosome maturation factor RimM from Vibrio campbellii (strain ATCC BAA-1116).